Consider the following 1382-residue polypeptide: DNA-directed RNA polymerase subunit beta'' (1382 aa).

Zn(2+) is bound by residues C224, C294, C301, and C304.

This sequence belongs to the RNA polymerase beta' chain family. RpoC2 subfamily. In plastids the minimal PEP RNA polymerase catalytic core is composed of four subunits: alpha, beta, beta', and beta''. When a (nuclear-encoded) sigma factor is associated with the core the holoenzyme is formed, which can initiate transcription. The cofactor is Zn(2+).

It is found in the plastid. The protein localises to the chloroplast. The enzyme catalyses RNA(n) + a ribonucleoside 5'-triphosphate = RNA(n+1) + diphosphate. In terms of biological role, DNA-dependent RNA polymerase catalyzes the transcription of DNA into RNA using the four ribonucleoside triphosphates as substrates. The chain is DNA-directed RNA polymerase subunit beta'' from Dioscorea elephantipes (Elephant's foot yam).